Here is a 637-residue protein sequence, read N- to C-terminus: Neutral ceramidase (637 aa).

His-34 provides a ligand contact to Mg(2+). Positions 96 and 204 each coordinate Zn(2+). Ser-256 serves as the catalytic Nucleophile. 2 residues coordinate Zn(2+): Glu-417 and Tyr-453. Mg(2+)-binding residues include Asp-575, Asp-577, and Thr-580.

Belongs to the neutral ceramidase family. The cofactor is Zn(2+). Requires Mg(2+) as cofactor.

It carries out the reaction an N-acylsphing-4-enine + H2O = sphing-4-enine + a fatty acid. The enzyme catalyses an N-acylsphinganine + H2O = sphinganine + a fatty acid. The catalysed reaction is an N-acyl-(4R)-4-hydroxysphinganine + H2O = (4R)-hydroxysphinganine + a fatty acid. It catalyses the reaction N-(9Z-octadecenoyl)-sphing-4-enine + H2O = sphing-4-enine + (9Z)-octadecenoate. It carries out the reaction N-(hexanoyl)sphing-4-enine + H2O = hexanoate + sphing-4-enine. The enzyme catalyses N-hexadecanoylsphing-4-enine + H2O = sphing-4-enine + hexadecanoate. The catalysed reaction is N-octadecanoylsphing-4-enine + H2O = sphing-4-enine + octadecanoate. It catalyses the reaction N-eicosanoyl-sphing-4-enine + H2O = eicosanoate + sphing-4-enine. It carries out the reaction N-(15Z-tetracosenoyl)-sphing-4-enine + H2O = (15Z)-tetracosenoate + sphing-4-enine. The enzyme catalyses N-tetracosanoyl-sphing-4-enine + H2O = tetracosanoate + sphing-4-enine. 90% of activity is inhibited by nickel, zinc and calcium ions. Magnesium, cobalt, copper and manganese ions inhibit between 50 and 80% of activity. Functionally, catalyzes the cleavage of the N-acyl linkage of the ceramides (Cers) to yield sphingosine (Sph) and free fatty acid. Also catalyzes the synthesis of Cers from Sph and fatty acid. Cers containning C6-C24 fatty acids are well hydrolyzed, and Cers with mono unsaturated fatty acids are much more hydrolyzed than those with saturated fatty acids. The chain is Neutral ceramidase from Mycobacterium tuberculosis (strain ATCC 25618 / H37Rv).